Reading from the N-terminus, the 667-residue chain is Protein OS-9 (667 aa).

A signal peptide spans 1-25 (MAAETLLSSLLGLLLLGLLLPASLT). In terms of domain architecture, MRH spans 108-230 (APCLLKTKDW…TIRTPRLCPH (123 aa)). C110 and C123 form a disulfide bridge. A mannooligosaccharide derivative contacts are provided by W117, W118, and Q130. An N-linked (GlcNAc...) asparagine glycan is attached at N177. Cystine bridges form between C181-C216 and C196-C228. Residues D182, R188, E212, and Y218 each contribute to the a mannooligosaccharide derivative site. Disordered stretches follow at residues 284–355 (WSET…NNVQ), 372–452 (LKGG…RDRL), 464–483 (LENI…LKKE), 504–540 (LEEK…PEHR), and 633–667 (AQKE…EFDF). Basic and acidic residues-rich tracts occupy residues 302–311 (TKDDSKDSDF) and 396–412 (PQRE…RQRE). A compositionally biased stretch (acidic residues) spans 413–429 (MEEEEDEDEDEDEDEDE). Residues 430–452 (RQLLGEFEKELEGILLPSDRDRL) show a composition bias toward basic and acidic residues. The span at 504 to 513 (LEEKQSPELV) shows a compositional bias: basic and acidic residues. Residues 514–523 (KKHKKKRVVP) are compositionally biased toward basic residues. The segment covering 633-647 (AQKERQRQKELESNY) has biased composition (basic and acidic residues).

This sequence belongs to the OS-9 family. In terms of assembly, component of the HRD1 complex, which comprises at least SYNV1/HRD1, DERL1/2, FAM8A1, HERPUD1/HERP, OS9, SEL1L and UBE2J1. FAM8A1 is stabilized by interaction with SYNV1, which prevents its proteasomal degradation. OS9 and UBE2J1 recruitment to the complex may be mediated by SEL1L. Through this complex, may interact with ERLEC1 and HSPA5. Interacts (via C-terminus) with CPNE6 (via second C2 domain); this interaction occurs in a calcium-dependent manner in vitro. Interacts with CREB3. Intramolecular disulfide bonds. Post-translationally, isoform 1 and isoform 2 are N-glycosylated. Ubiquitously expressed. Found as well in all tumor cell lines analyzed, amplified in sarcomas. Highly expressed in osteosarcoma SJSA-1 and rhabdomyosarcoma Rh30 cell lines. As to expression, isoform 2 is the major isoform detected in all cell types examined.

The protein resides in the endoplasmic reticulum lumen. Its function is as follows. Lectin component of the HRD1 complex, which functions in endoplasmic reticulum (ER) quality control and ER-associated degradation (ERAD). Specifically recognizes and binds improperly folded glycoproteins as well as hyperglycosylated proteins, retain them in the ER, and transfers them to the ubiquitination machinery and promote their degradation. Possible targets include TRPV4 as well as hyperglycosylated HSP90B1. This is Protein OS-9 (OS9) from Homo sapiens (Human).